A 180-amino-acid chain; its full sequence is E3 ubiquitin-protein ligase RNF5 (180 aa).

Alanine 2 is subject to N-acetylalanine. An RING-type zinc finger spans residues 27–68; that stretch reads CNICLETAREAVVSVCGHLYCWPCLHQWLETRPERQECPVCK. The tract at residues 79-110 is disordered; it reads LYGRGSQKPQDPRLKTPPRPQGQRPAPESRGG. Serine 84 carries the phosphoserine modification. Threonine 94 carries the post-translational modification Phosphothreonine. Residue serine 107 is modified to Phosphoserine. Transmembrane regions (helical) follow at residues 118–138 and 160–180; these read GGFHFSFGVGAFPFGFFTTVF and SWQDSLFLFLAIFFFFWLLSI.

The protein belongs to the RNF5 family. Interacts with PXN. Interacts with Salmonella typhimurium sopA. Interacts with JKAMP. Interacts with STING1; the interaction of endogenous proteins is dependent on viral infection. Widely expressed.

The protein localises to the cell membrane. It localises to the mitochondrion membrane. The protein resides in the endoplasmic reticulum membrane. The enzyme catalyses S-ubiquitinyl-[E2 ubiquitin-conjugating enzyme]-L-cysteine + [acceptor protein]-L-lysine = [E2 ubiquitin-conjugating enzyme]-L-cysteine + N(6)-ubiquitinyl-[acceptor protein]-L-lysine.. The protein operates within protein modification; protein ubiquitination. Membrane-bound E3 ubiquitin-protein ligase that mediates ubiquitination of target proteins. May function together with E2 ubiquitin-conjugating enzymes UBE2D1/UBCH5A and UBE2D2/UBC4. Mediates ubiquitination of PXN/paxillin,thereby regulating cell motility and localization of PXN/paxillin. Catalyzes ubiquitination of Salmonella type III secreted protein sopA. Mediates the 'Lys-63'-linked polyubiquitination of JKAMP thereby regulating JKAMP function by decreasing its association with components of the proteasome and ERAD; the ubiquitination appears to involve E2 ubiquitin-conjugating enzyme UBE2N. Mediates the 'Lys-48'-linked polyubiquitination of STING1 at 'Lys-150' leading to its proteasomal degradation; the ubiquitination occurs in mitochondria after viral transfection and regulates antiviral responses. Catalyzes ubiquitination and subsequent degradation of ATG4B, thereby inhibiting autophagy. This Homo sapiens (Human) protein is E3 ubiquitin-protein ligase RNF5.